The sequence spans 528 residues: Succinate-semialdehyde dehydrogenase, mitochondrial (528 aa).

The transit peptide at 1–34 directs the protein to the mitochondrion; sequence MVIGAAARVAIGGCRKLISSHTSLLLVSSQCRQM. 196–198 contacts NAD(+); sequence TPW. Arg-207 contacts substrate. NAD(+) contacts are provided by residues 222–225, 275–280, and Glu-297; these read KPSE and GSTAVG. Glu-297 functions as the Proton acceptor in the catalytic mechanism. Arg-325 serves as a coordination point for substrate. Cys-331 serves as the catalytic Nucleophile. A disulfide bridge connects residues Cys-331 and Cys-333. Residue 428 to 430 participates in NAD(+) binding; sequence EIF. A substrate-binding site is contributed by Ser-488.

Belongs to the aldehyde dehydrogenase family. As to quaternary structure, homotetramer. Expressed in developing leaf tissues.

It is found in the mitochondrion matrix. The enzyme catalyses succinate semialdehyde + NAD(+) + H2O = succinate + NADH + 2 H(+). It functions in the pathway amino-acid degradation; 4-aminobutanoate degradation. Its activity is regulated as follows. Competitive inhibition by NADH. Inhibited by ATP, ADP and AMP. Redox-regulated. Inhibited under oxydizing conditions. Oxidizes specifically succinate semialdehyde. Involved in plant response to environmental stress by preventing the accumulation of reactive oxygen species, probably by regulating proline, gamma-hydroxybutyrate (GHB) and gamma-aminobutyrate (GABA) levels. Required for the maintenance of the shoot apical meristem (SAM) structure and subsequent adaxial-abaxial axis-dependent development of cotyledons and leaves. In Arabidopsis thaliana (Mouse-ear cress), this protein is Succinate-semialdehyde dehydrogenase, mitochondrial.